A 334-amino-acid polypeptide reads, in one-letter code: Protein-methionine-sulfoxide reductase catalytic subunit MsrP (334 aa).

Positions 1–44 (MKKNQFLKESDVTAESVFFMKRRQVLKALGISAAALSLPHAAHA) form a signal peptide, tat-type signal. Mo-molybdopterin is bound by residues Asn88, 91–92 (YE), Cys146, Thr181, Asn233, Arg238, and 249–251 (GIK).

Belongs to the MsrP family. Heterodimer of a catalytic subunit (MsrP) and a heme-binding subunit (MsrQ). Mo-molybdopterin is required as a cofactor. In terms of processing, predicted to be exported by the Tat system. The position of the signal peptide cleavage has not been experimentally proven.

Its subcellular location is the periplasm. It catalyses the reaction L-methionyl-[protein] + a quinone + H2O = L-methionyl-(S)-S-oxide-[protein] + a quinol. It carries out the reaction L-methionyl-[protein] + a quinone + H2O = L-methionyl-(R)-S-oxide-[protein] + a quinol. Its function is as follows. Part of the MsrPQ system that repairs oxidized periplasmic proteins containing methionine sulfoxide residues (Met-O), using respiratory chain electrons. Thus protects these proteins from oxidative-stress damage caused by reactive species of oxygen and chlorine generated by the host defense mechanisms. MsrPQ is essential for the maintenance of envelope integrity under bleach stress, rescuing a wide series of structurally unrelated periplasmic proteins from methionine oxidation, including the primary periplasmic chaperone SurA and the lipoprotein Pal. The catalytic subunit MsrP is non-stereospecific, being able to reduce both (R-) and (S-) diastereoisomers of methionine sulfoxide. The chain is Protein-methionine-sulfoxide reductase catalytic subunit MsrP from Escherichia coli O157:H7.